Here is a 253-residue protein sequence, read N- to C-terminus: Probable transcriptional regulatory protein Tpet_0454 (253 aa).

It belongs to the TACO1 family.

It localises to the cytoplasm. The polypeptide is Probable transcriptional regulatory protein Tpet_0454 (Thermotoga petrophila (strain ATCC BAA-488 / DSM 13995 / JCM 10881 / RKU-1)).